Here is a 1026-residue protein sequence, read N- to C-terminus: MSSFDIFSPTASVSGKFFLEASAGTGKTFTIEQVVLRSLLEGSIEQTKNILVVTFTNAATNELKLRIQASLKQALSLFSQALSHPGTPLPPYISSSETKVKQLYMKIRNSLATLDEMNIFTIHGFCRFTLEQHFPWIQPIQPSSIFSEPQTIQQHILDYLRKNLWDTVLSPKQYAFLSYHHRATTQQTRHLIERLLQDYTSTPNLALSPLSITLQKLKAWVSRYQHLAPLSLEEMQAFSLRFKQSDLSIERELPAFVQQFETNPYSLDMLFFPGMVQKFQEENRNKKKLSAPASPLDPFFQDWIQLAHPFCQKEPIFHTLLKSVQQHLKTHCAQSYSHDESIATLESLLAHNDTVVSQLRKQFQLVLIDEFQDTDKRQWQIFSKLFASPDYSGSLFLIGDPKQSIYEWRNADLPTYLQAKHSFPKEAQLILDTNYRSTPELMQALNHLFSLPTPFLETPQNILYHPLHSKGSAEISYSEFSPIHFFSSEDIQEETLWISKTASYLRSAYSIPFGNMAVLVQDYPQALKLITHSTIPMAYCKEKRIFDRTESPYLLILLLEALLYPENQQKIQAILMSRLFQLSSTEIHQHLKTFSSLFFTLNRHLYHYSLLATFYKLMGENVLSQTIGETLLQTPLGDIIFQELEALCLYLDKTTENPHHKLLHLINILITGKYDEELSFSSQSNDENMIKITTVHSSKGLEYDVVFCSCLNKAKEKTPSVHMREMYVACTRAKKFLFIPFSPIEKRSLSTKKLSALANYANVTKHHSVPHLVETLTSSSPELFSSSFQPPESSLTPDRERLPQQTYFSLPHLPSRTIHSFSSTVENLHFSEPIQELSPSLLFPGGSLTGTLIHKLLESLAGNFAACFEEIFNKAQTLLKNTPLEGYESIIAEKICTVFSTTLPFSSGSFALRNVHPHNIRAEETFLLQEEGELWQGIVDLFFEHKDRFFIIDWKTSFLGDETSCYSPDQLHLYIQRQGLDRQERLYRKAAKRFLHQFNSLLQVEMAFVFIRGLDDKGNGFLQPGR.

The UvrD-like helicase ATP-binding domain maps to 1 to 438; the sequence is MSSFDIFSPT…LILDTNYRST (438 aa). Residues 1-766 form a DNA-binding and helicase activity, interacts with RecC region; that stretch reads MSSFDIFSPT…LANYANVTKH (766 aa). An ATP-binding site is contributed by 21-28; that stretch reads ASAGTGKT. Residues 815 to 1026 are nuclease activity, interacts with RecD and RecA; the sequence is SRTIHSFSST…KGNGFLQPGR (212 aa). His-854, Asp-940, and Asp-953 together coordinate Mg(2+). Catalysis depends on Asp-953, which acts as the For nuclease activity.

It belongs to the helicase family. UvrD subfamily. Heterotrimer of RecB, RecC and RecD. All subunits contribute to DNA-binding. Interacts with RecA. Mg(2+) is required as a cofactor.

It carries out the reaction Exonucleolytic cleavage (in the presence of ATP) in either 5'- to 3'- or 3'- to 5'-direction to yield 5'-phosphooligonucleotides.. The catalysed reaction is Couples ATP hydrolysis with the unwinding of duplex DNA by translocating in the 3'-5' direction.. The enzyme catalyses ATP + H2O = ADP + phosphate + H(+). Functionally, a helicase/nuclease that prepares dsDNA breaks (DSB) for recombinational DNA repair. Binds to DSBs and unwinds DNA via a highly rapid and processive ATP-dependent bidirectional helicase activity. Unwinds dsDNA until it encounters a Chi (crossover hotspot instigator) sequence from the 3' direction. Cuts ssDNA a few nucleotides 3' to the Chi site. The properties and activities of the enzyme are changed at Chi. The Chi-altered holoenzyme produces a long 3'-ssDNA overhang and facilitates RecA-binding to the ssDNA for homologous DNA recombination and repair. Holoenzyme degrades any linearized DNA that is unable to undergo homologous recombination. In the holoenzyme this subunit contributes ATPase, 3'-5' helicase, exonuclease activity and loads RecA onto ssDNA. In Chlamydia trachomatis serovar D (strain ATCC VR-885 / DSM 19411 / UW-3/Cx), this protein is RecBCD enzyme subunit RecB.